The primary structure comprises 69 residues: Putative membrane protein insertion efficiency factor (69 aa).

The protein belongs to the UPF0161 family.

Its subcellular location is the cell inner membrane. Its function is as follows. Could be involved in insertion of integral membrane proteins into the membrane. In Novosphingobium aromaticivorans (strain ATCC 700278 / DSM 12444 / CCUG 56034 / CIP 105152 / NBRC 16084 / F199), this protein is Putative membrane protein insertion efficiency factor.